A 230-amino-acid chain; its full sequence is Bidirectional sugar transporter SWEET2b (230 aa).

Residues 1 to 6 (MDSLYD) are Extracellular-facing. The chain crosses the membrane as a helical span at residues 7 to 27 (ISCFAAGLAGNIFALALFLSP). Positions 13 to 98 (GLAGNIFALA…CLFIFYADSR (86 aa)) constitute a MtN3/slv 1 domain. Over 28–45 (VTTFKRILKAKSTERFDG) the chain is Cytoplasmic. Residues 46 to 66 (LPYLFSLLNCLICLWYGLPWV) traverse the membrane as a helical segment. The Extracellular segment spans residues 67 to 72 (ADGRLL). The chain crosses the membrane as a helical span at residues 73-93 (VATVNGIGAVFQLAYICLFIF). The Cytoplasmic portion of the chain corresponds to 94 to 103 (YADSRKTRMK). Residues 104 to 124 (IIGLLVLVVCGFALVSHASVF) form a helical membrane-spanning segment. Residues 125–137 (FFDQPLRQQFVGA) are Extracellular-facing. Residues 133–217 (QFVGAVSMAS…LALYAYYSRK (85 aa)) form the MtN3/slv 2 domain. The chain crosses the membrane as a helical span at residues 138 to 158 (VSMASLISMFASPLAVMGVVI). Topologically, residues 159 to 167 (RSESVEFMP) are cytoplasmic. A helical transmembrane segment spans residues 168–188 (FYLSLSTFLMSASFALYGLLL). Over 189-190 (RD) the chain is Extracellular. A helical membrane pass occupies residues 191–211 (FFIYFPNGLGLILGAMQLALY). Residues 212 to 230 (AYYSRKWRGQDSSAPLLLA) are Cytoplasmic-facing.

This sequence belongs to the SWEET sugar transporter family. As to quaternary structure, forms homooligomers and/or heterooligomers.

It localises to the cell membrane. Functionally, mediates both low-affinity uptake and efflux of sugar across the plasma membrane. The protein is Bidirectional sugar transporter SWEET2b (SWEET2B) of Oryza sativa subsp. indica (Rice).